Consider the following 355-residue polypeptide: MDKFLIKMPIKHKNNETPEQKPIVKKETPKAAAKQSNKNTPIQAKEKENAQNDTPKQGRAGRSAKPAAKRKNLDTLEVNTEKNTAESENPPKRRSGRLTRSTRSMAEEGTPSPEKVKPEKLPFIKYRGAIKYFTENQDIAASADDVMQWVDKQTDVDVVPMAFDMEWPFSFQTGPGKSSVIQICVDEKCCYVYQLTNLKKLPAALVALINHPKVRLHGVNIKADFRKLQRDFPEVSADALIEKCVDLGVWCNEICETGGRWSLERLANFIAKKAMDKSKKVRMSKWHVIPLDENQLMYAAIDVYIGQVIYRDLEQREKQKLINELQFKEQNGEAAFKAVKGLGETFLSKINEITL.

Residues 1-119 are disordered; sequence MDKFLIKMPI…TPSPEKVKPE (119 aa). Composition is skewed to basic and acidic residues over residues 13 to 29 and 71 to 91; these read KNNE…KETP and KNLD…ENPP. Residues Ser-104 and Ser-112 each carry the phosphoserine modification. In terms of domain architecture, 3'-5' exonuclease spans 154–315; that stretch reads TDVDVVPMAF…GQVIYRDLEQ (162 aa). Mg(2+) contacts are provided by Asp-164, Glu-166, and Asp-302.

Belongs to the WRNexo family.

The protein resides in the nucleus. Its function is as follows. Has exonuclease activity on both single-stranded and duplex templates bearing overhangs, but not blunt ended duplex DNA, and cleaves in a 3'-5' direction. Essential for the formation of DNA replication focal centers. Has an important role in maintaining genome stability. This chain is 3'-5' exonuclease, found in Drosophila persimilis (Fruit fly).